A 498-amino-acid chain; its full sequence is MDPRARYPPGIGNGRGGNPNYYGRGPPPSQHQQHQHQHQQPPHPHHHQYVQRQPQPQQTPHNSQHQQWLRRNQIAAEAAGASEQKAPPVADGIDSSSQDWKAQLKLPPQDTRYRTEDVTATKGNEFEDYFLKRELLMGIYEKGFERPSPIQEESIPIALTGSDILARAKNGTGKTAAFCIPALEKIDQDKNAIQVVILVPTRELALQTSQVCKELGKHLKIQVMVTTGGTSLKDDIVRLYQPVHLLVGTPGRILDLTKKGVCVLKNCSMLVMDEADKLLSPEFQPSIQELIRYLPSNRQILMFSATFPVTVKEFKDKYLPKPYVINLMDELTLKGITQFYAFVEERQKVHCLNTLFSKLQINQSIIFCNSVNRVELLAKKITELGYSCFYIHAKMLQDHRNRVFHDFRNGACRNLVCTDLFTRGIDIQAVNVVINFDFPKSAETYLHRVGRSGRFGHLGLAVNLITYEDRFNLYRIEQELGTEIKPIPPQIDRAIYCQ.

Positions M1–Q109 are disordered. Residues Q33–Y49 are compositionally biased toward basic residues. 2 stretches are compositionally biased toward low complexity: residues V50–H61 and A75–A86. Residues N124 to E152 carry the Q motif motif. A Helicase ATP-binding domain is found at I155–I325. Residue A168–T175 coordinates ATP. The DEAD box signature appears at D273–D276. A Helicase C-terminal domain is found at G335 to I495.

Belongs to the DEAD box helicase family. DDX6/DHH1 subfamily.

It localises to the cytoplasm. Its subcellular location is the P-body. The catalysed reaction is ATP + H2O = ADP + phosphate + H(+). ATP-dependent RNA helicase involved in mRNA turnover, and more specifically in mRNA decapping. The sequence is that of DEAD-box ATP-dependent RNA helicase 6 from Oryza sativa subsp. japonica (Rice).